Reading from the N-terminus, the 201-residue chain is MGKIIGITGGIASGKSTVTNFLRQQGFQVVDADAVVHQLQKPGGRLFEALVQHFGQEIILENGELNRPLLASLIFSNPDEREWSKQIQGEIIREELATLREQLAQTEEIFFMDIPLLFEQDYSDWFAETWLVYVDRDAQVERLMKRDQLSKDEAESRLAAQWPLEKKKDLASQVLDNNGNQNQLLNQVHILLEGGRQDDRD.

Positions 4–201 constitute a DPCK domain; it reads IIGITGGIAS…LEGGRQDDRD (198 aa). 12–17 lines the ATP pocket; that stretch reads ASGKST.

The protein belongs to the CoaE family.

It is found in the cytoplasm. The catalysed reaction is 3'-dephospho-CoA + ATP = ADP + CoA + H(+). The protein operates within cofactor biosynthesis; coenzyme A biosynthesis; CoA from (R)-pantothenate: step 5/5. Its function is as follows. Catalyzes the phosphorylation of the 3'-hydroxyl group of dephosphocoenzyme A to form coenzyme A. This is Dephospho-CoA kinase from Streptococcus pneumoniae serotype 4 (strain ATCC BAA-334 / TIGR4).